The chain runs to 914 residues: Alanine--tRNA ligase (914 aa).

Residues His-608, His-612, Cys-711, and His-715 each coordinate Zn(2+).

It belongs to the class-II aminoacyl-tRNA synthetase family. Zn(2+) is required as a cofactor.

The protein resides in the cytoplasm. It catalyses the reaction tRNA(Ala) + L-alanine + ATP = L-alanyl-tRNA(Ala) + AMP + diphosphate. Catalyzes the attachment of alanine to tRNA(Ala) in a two-step reaction: alanine is first activated by ATP to form Ala-AMP and then transferred to the acceptor end of tRNA(Ala). Also edits incorrectly charged Ser-tRNA(Ala) and Gly-tRNA(Ala) via its editing domain. This is Alanine--tRNA ligase from Methanoregula boonei (strain DSM 21154 / JCM 14090 / 6A8).